The following is a 237-amino-acid chain: Indole-3-glycerol phosphate synthase (237 aa).

It belongs to the TrpC family.

The catalysed reaction is 1-(2-carboxyphenylamino)-1-deoxy-D-ribulose 5-phosphate + H(+) = (1S,2R)-1-C-(indol-3-yl)glycerol 3-phosphate + CO2 + H2O. It functions in the pathway amino-acid biosynthesis; L-tryptophan biosynthesis; L-tryptophan from chorismate: step 4/5. The polypeptide is Indole-3-glycerol phosphate synthase (Thermoplasma volcanium (strain ATCC 51530 / DSM 4299 / JCM 9571 / NBRC 15438 / GSS1)).